Here is a 259-residue protein sequence, read N- to C-terminus: Phosphatidylglycerol--prolipoprotein diacylglyceryl transferase (259 aa).

4 helical membrane passes run 12 to 32 (LSLH…VYLA), 46 to 66 (IIDF…IYYV), 83 to 103 (IWNG…VLFV), and 109 to 129 (VLNP…AQAI). Arginine 131 serves as a coordination point for a 1,2-diacyl-sn-glycero-3-phospho-(1'-sn-glycerol). The next 3 helical transmembrane spans lie at 167–187 (VPTF…IMVW), 194–214 (LVDG…RLVI), and 226–246 (GIRV…VFIF).

It belongs to the Lgt family.

It is found in the cell membrane. It carries out the reaction L-cysteinyl-[prolipoprotein] + a 1,2-diacyl-sn-glycero-3-phospho-(1'-sn-glycerol) = an S-1,2-diacyl-sn-glyceryl-L-cysteinyl-[prolipoprotein] + sn-glycerol 1-phosphate + H(+). Its pathway is protein modification; lipoprotein biosynthesis (diacylglyceryl transfer). In terms of biological role, catalyzes the transfer of the diacylglyceryl group from phosphatidylglycerol to the sulfhydryl group of the N-terminal cysteine of a prolipoprotein, the first step in the formation of mature lipoproteins. In Streptococcus equi subsp. equi (strain 4047), this protein is Phosphatidylglycerol--prolipoprotein diacylglyceryl transferase.